We begin with the raw amino-acid sequence, 651 residues long: Maternal embryonic leucine zipper kinase (651 aa).

Residues 11–263 form the Protein kinase domain; sequence YELHETIGTG…MKNLLNHPWI (253 aa). Residues 17–25 and lysine 40 each bind ATP; that span reads IGTGGFAKV. Phosphothreonine; by autocatalysis is present on threonine 56. The active-site Proton acceptor is the aspartate 132. The residue at position 163 (tyrosine 163) is a Phosphotyrosine; by autocatalysis. At threonine 167 the chain carries Phosphothreonine; by autocatalysis. Phosphoserine; by autocatalysis occurs at positions 171 and 253. The interval 282–321 is UBA-like; it reads LDDDCVTELSVHHRNNRQTMEDLISLWQYDHLTATYLLLL. The interval 326-651 is autoinhibitory region; the sequence is RGKPVRLRLS…VEDILSSCKV (326 aa). Serine 336, serine 343, and serine 356 each carry phosphoserine; by autocatalysis. Phosphotyrosine is present on tyrosine 367. A Phosphoserine; by autocatalysis modification is found at serine 391. A Phosphothreonine; by autocatalysis modification is found at threonine 398. Serine 407 bears the Phosphoserine; by autocatalysis mark. The residue at position 409 (threonine 409) is a Phosphothreonine. Serine 431 carries the phosphoserine; by autocatalysis modification. Phosphothreonine is present on threonine 478. A Phosphothreonine; by autocatalysis modification is found at threonine 494. Serine 498 is subject to Phosphoserine. At serine 505 the chain carries Phosphoserine; by autocatalysis. Threonine 518 carries the phosphothreonine modification. Serine 529 is modified (phosphoserine; by autocatalysis). A Phosphoserine modification is found at serine 529. Position 539 is a phosphothreonine; by autocatalysis (threonine 539). The KA1 domain maps to 602–651; the sequence is SDFGKVTMQFELEVCQLQKPDVVGIRRQRLKGDAWVYKRLVEDILSSCKV.

The protein belongs to the protein kinase superfamily. CAMK Ser/Thr protein kinase family. SNF1 subfamily. As to quaternary structure, monomer. Interacts with ZNF622 and PPP1R8. Autophosphorylated: autophosphorylation of the T-loop at Thr-167 and Ser-171 is required for activation. Thr-478 phosphorylation during mitosis promotes interaction with PPP1R8. In terms of tissue distribution, expressed in placenta, kidney, thymus, testis, ovary and intestine.

It localises to the cell membrane. The enzyme catalyses L-tyrosyl-[protein] + ATP = O-phospho-L-tyrosyl-[protein] + ADP + H(+). It catalyses the reaction L-seryl-[protein] + ATP = O-phospho-L-seryl-[protein] + ADP + H(+). It carries out the reaction L-threonyl-[protein] + ATP = O-phospho-L-threonyl-[protein] + ADP + H(+). Its activity is regulated as follows. Activated by autophosphorylation of the T-loop at Thr-167 and Ser-171: in contrast to other members of the SNF1 subfamily, phosphorylation at Thr-167 is not mediated by STK11/LKB1 but via autophosphorylation instead. Inhibited by calcium-binding. Kinase activity is also regulated by reducing agents: dithiothreitol (DTT) or reduced glutathione are required for kinase activity in vitro; such dependence is however not due to the presence of disulfide bonds. Serine/threonine-protein kinase involved in various processes such as cell cycle regulation, self-renewal of stem cells, apoptosis and splicing regulation. Has a broad substrate specificity; phosphorylates BCL2L14, CDC25B, MAP3K5/ASK1 and ZNF622. Acts as an activator of apoptosis by phosphorylating and activating MAP3K5/ASK1. Acts as a regulator of cell cycle, notably by mediating phosphorylation of CDC25B, promoting localization of CDC25B to the centrosome and the spindle poles during mitosis. Plays a key role in cell proliferation and carcinogenesis. Required for proliferation of embryonic and postnatal multipotent neural progenitors. Phosphorylates and inhibits BCL2L14, possibly leading to affect mammary carcinogenesis by mediating inhibition of the pro-apoptotic function of BCL2L14. Also involved in the inhibition of spliceosome assembly during mitosis by phosphorylating ZNF622, thereby contributing to its redirection to the nucleus. May also play a role in primitive hematopoiesis. This chain is Maternal embryonic leucine zipper kinase (MELK), found in Homo sapiens (Human).